The sequence spans 213 residues: Ergothioneine transport ATP-binding protein EgtV (213 aa).

The 208-residue stretch at 5–212 folds into the ABC transporter domain; it reads VTIENVSFNY…ATKTLEIKAL (208 aa). 37 to 44 lines the ATP pocket; sequence GESGSGKS.

It belongs to the ABC transporter superfamily. As to quaternary structure, the complex is composed of two ATP-binding proteins (EgtV) and two transmembrane proteins (EgtU).

The protein localises to the cell inner membrane. It carries out the reaction ergothioneine(out) + ATP + H2O = ergothioneine(in) + ADP + phosphate + H(+). In terms of biological role, part of the ABC transporter complex EgtUV involved in the uptake of ergothioneine (EGT), a natural low-molecular weight (LMW) thiol antioxidant which protects H.pylori against bleach stress. Responsible for energy coupling to the transport system. The polypeptide is Ergothioneine transport ATP-binding protein EgtV (Helicobacter pylori (strain G27)).